A 141-amino-acid chain; its full sequence is Large ribosomal subunit protein uL16 (141 aa).

Belongs to the universal ribosomal protein uL16 family. Part of the 50S ribosomal subunit.

In terms of biological role, binds 23S rRNA and is also seen to make contacts with the A and possibly P site tRNAs. This chain is Large ribosomal subunit protein uL16, found in Microchaete diplosiphon (Fremyella diplosiphon).